The chain runs to 124 residues: Large ribosomal subunit protein uL18 (124 aa).

Belongs to the universal ribosomal protein uL18 family. In terms of assembly, part of the 50S ribosomal subunit; part of the 5S rRNA/L5/L18/L25 subcomplex. Contacts the 5S and 23S rRNAs.

This is one of the proteins that bind and probably mediate the attachment of the 5S RNA into the large ribosomal subunit, where it forms part of the central protuberance. This chain is Large ribosomal subunit protein uL18, found in Aquifex aeolicus (strain VF5).